Reading from the N-terminus, the 78-residue chain is MVLVTCNRALAQGDFCLLALIFCHQTCRTPEKHKASQSSAKLVSINISLITSHHRLRHPRRRQHHHRNNFAPTNWYWG.

This is an uncharacterized protein from Plasmodium falciparum (isolate fcm17 / Senegal).